Here is a 291-residue protein sequence, read N- to C-terminus: uncharacterized protein (291 aa).

An HTH tetR-type domain is found at 2-62 (KEKEKLIIET…SMLNYYYDKT (61 aa)). The segment at residues 25 to 44 (SVQEIAKECKISKGAFYIYF) is a DNA-binding region (H-T-H motif).

This is an uncharacterized protein from Bacillus subtilis (strain 168).